Here is a 477-residue protein sequence, read N- to C-terminus: Aspartyl/glutamyl-tRNA(Asn/Gln) amidotransferase subunit B (477 aa).

The protein belongs to the GatB/GatE family. GatB subfamily. Heterotrimer of A, B and C subunits.

The catalysed reaction is L-glutamyl-tRNA(Gln) + L-glutamine + ATP + H2O = L-glutaminyl-tRNA(Gln) + L-glutamate + ADP + phosphate + H(+). It carries out the reaction L-aspartyl-tRNA(Asn) + L-glutamine + ATP + H2O = L-asparaginyl-tRNA(Asn) + L-glutamate + ADP + phosphate + 2 H(+). Functionally, allows the formation of correctly charged Asn-tRNA(Asn) or Gln-tRNA(Gln) through the transamidation of misacylated Asp-tRNA(Asn) or Glu-tRNA(Gln) in organisms which lack either or both of asparaginyl-tRNA or glutaminyl-tRNA synthetases. The reaction takes place in the presence of glutamine and ATP through an activated phospho-Asp-tRNA(Asn) or phospho-Glu-tRNA(Gln). This chain is Aspartyl/glutamyl-tRNA(Asn/Gln) amidotransferase subunit B, found in Lactococcus lactis subsp. cremoris (strain MG1363).